A 589-amino-acid chain; its full sequence is ATP-dependent lipid A-core flippase (589 aa).

Helical transmembrane passes span L29–L49, W70–D90, V157–V177, M261–G281, and L283–K303. Residues V32–R314 form the ABC transmembrane type-1 domain. In terms of domain architecture, ABC transporter spans I346–M582. G380–S387 lines the ATP pocket.

This sequence belongs to the ABC transporter superfamily. Lipid exporter (TC 3.A.1.106) family. As to quaternary structure, homodimer.

The protein localises to the cell inner membrane. It catalyses the reaction ATP + H2O + lipid A-core oligosaccharideSide 1 = ADP + phosphate + lipid A-core oligosaccharideSide 2.. Functionally, involved in lipopolysaccharide (LPS) biosynthesis. Translocates lipid A-core from the inner to the outer leaflet of the inner membrane. Transmembrane domains (TMD) form a pore in the inner membrane and the ATP-binding domain (NBD) is responsible for energy generation. The chain is ATP-dependent lipid A-core flippase from Xanthomonas axonopodis pv. citri (strain 306).